The primary structure comprises 931 residues: Mitochondrial cox1 translation regulator ppr4 (931 aa).

A mitochondrion-targeting transit peptide spans Met1–Phe16. PPR repeat units follow at residues Asn247–Thr277, Ser282–Ile316, His429–Val461, Asp462–Thr496, Ser497–Glu531, Asn598–Pro632, and Pro683–Tyr713.

In terms of assembly, component of the MRH5C complex, composed of mrh5, ppr4, mtf2, and sls1. Proteins mtf2 and sls1 form a subcomplex that serves as a scaffold to bring mrh5 and ppr4 together. The MRH5C complex associates with the small subunit of the mitochondrial ribosome.

Its subcellular location is the mitochondrion. In terms of biological role, RNA-binding translation activation factor that as part of the MRH5C complex specifically recruits cox1 mRNA to the mitochondrial ribosome for translation initiation. The protein is Mitochondrial cox1 translation regulator ppr4 of Schizosaccharomyces pombe (strain 972 / ATCC 24843) (Fission yeast).